Reading from the N-terminus, the 425-residue chain is D-amino acid dehydrogenase 2 (425 aa).

Residue 3-17 coordinates FAD; that stretch reads ITVVGAGIVGISTAY.

It belongs to the DadA oxidoreductase family. FAD is required as a cofactor.

It carries out the reaction a D-alpha-amino acid + A + H2O = a 2-oxocarboxylate + AH2 + NH4(+). Functionally, oxidative deamination of D-amino acids. This chain is D-amino acid dehydrogenase 2 (dadA2), found in Ralstonia nicotianae (strain ATCC BAA-1114 / GMI1000) (Ralstonia solanacearum).